Reading from the N-terminus, the 108-residue chain is Putative transmembrane protein ORF108 (108 aa).

3 helical membrane-spanning segments follow: residues 11 to 31, 33 to 53, and 69 to 89; these read FIMG…SSII, IAMT…TVHF, and VGFL…LLII.

The protein resides in the host membrane. The protein is Putative transmembrane protein ORF108 of Acidianus hospitalis (AFV-1).